The following is a 172-amino-acid chain: 5'(3')-deoxyribonucleotidase (172 aa).

Asp8 functions as the Nucleophile in the catalytic mechanism. Asp8, Asp10, and Asp132 together coordinate Mg(2+). Residue Asp10 is the Proton donor of the active site.

Belongs to the 5'(3')-deoxyribonucleotidase family. Requires Mg(2+) as cofactor.

In terms of biological role, dephosphorylates nucleoside monophosphates such as the 5' and 2'(3')-phosphates of deoxyribonucleotides in vitro. Also catalyzes the dephosphorylation of coenzyme A (CoA), pyridoxal-5'-phosphate (PLP), riboflavine-5-phosphate (FMN) and nicotinamide adenine dinucleotide phosphate (NADP) in vitro. In Bacillus subtilis (strain 168), this protein is 5'(3')-deoxyribonucleotidase (yorS).